An 82-amino-acid chain; its full sequence is RNA-binding protein YbxF (82 aa).

The protein belongs to the eukaryotic ribosomal protein eL8 family.

In Geobacillus stearothermophilus (Bacillus stearothermophilus), this protein is RNA-binding protein YbxF.